The following is a 397-amino-acid chain: Argininosuccinate synthase (397 aa).

An ATP-binding site is contributed by 8–16; that stretch reads AYSGGLDTS. Residue Y87 participates in L-citrulline binding. G117 contributes to the ATP binding site. L-aspartate contacts are provided by T119, N123, and D124. N123 lines the L-citrulline pocket. L-citrulline-binding residues include R127, S175, E259, and Y271.

This sequence belongs to the argininosuccinate synthase family. Type 1 subfamily. In terms of assembly, homotetramer.

The protein localises to the cytoplasm. The catalysed reaction is L-citrulline + L-aspartate + ATP = 2-(N(omega)-L-arginino)succinate + AMP + diphosphate + H(+). The protein operates within amino-acid biosynthesis; L-arginine biosynthesis; L-arginine from L-ornithine and carbamoyl phosphate: step 2/3. This is Argininosuccinate synthase from Streptomyces griseus subsp. griseus (strain JCM 4626 / CBS 651.72 / NBRC 13350 / KCC S-0626 / ISP 5235).